A 347-amino-acid chain; its full sequence is S-adenosylmethionine:tRNA ribosyltransferase-isomerase (347 aa).

It belongs to the QueA family. As to quaternary structure, monomer.

It is found in the cytoplasm. The catalysed reaction is 7-aminomethyl-7-carbaguanosine(34) in tRNA + S-adenosyl-L-methionine = epoxyqueuosine(34) in tRNA + adenine + L-methionine + 2 H(+). Its pathway is tRNA modification; tRNA-queuosine biosynthesis. Functionally, transfers and isomerizes the ribose moiety from AdoMet to the 7-aminomethyl group of 7-deazaguanine (preQ1-tRNA) to give epoxyqueuosine (oQ-tRNA). The protein is S-adenosylmethionine:tRNA ribosyltransferase-isomerase of Exiguobacterium sibiricum (strain DSM 17290 / CCUG 55495 / CIP 109462 / JCM 13490 / 255-15).